Reading from the N-terminus, the 316-residue chain is MNHFKTYMLLAGLTALFMGAGFLIGGATGMMIALVFALAMNAFSYWNADKIVLRTYGAVEVDESHPEPLIRNYVIDTVEMARSAGLPRPRITVIDSAQPNAFATGRDPDHAAVAASTGLLQLLTREEIRGVMAHELAHVKNRDTLVMTVTATIAGAISALANFAFFFGGSRDEEGNGGGLGGMIGAILIAILAPIAAMLVQMAISRAREYEADRIGAQIAGDSESLARALQKIEAYARGGYENVQAERNPATAHMFIINPLAGKGADNLFSTHPATHNRVEALMRLGVERGARRPVMAATTSSSVPLSGERGGPWS.

Residues 16–36 (LFMGAGFLIGGATGMMIALVF) traverse the membrane as a helical segment. His134 is a binding site for Zn(2+). Glu135 is a catalytic residue. His138 serves as a coordination point for Zn(2+). Transmembrane regions (helical) follow at residues 149 to 169 (VTAT…FFGG) and 180 to 200 (LGGM…AMLV). Glu209 is a Zn(2+) binding site. The segment at 295-316 (PVMAATTSSSVPLSGERGGPWS) is disordered.

It belongs to the peptidase M48B family. The cofactor is Zn(2+).

Its subcellular location is the cell inner membrane. The sequence is that of Protease HtpX homolog from Caulobacter vibrioides (strain ATCC 19089 / CIP 103742 / CB 15) (Caulobacter crescentus).